The primary structure comprises 361 residues: MAVEGKQVAPKKAIIVELLKKLELGLVPDDEIKKLIRIQLGRRLQWGCKSTYEEQIAQLVNLTHSLRQMKIATEVETLDDQMYEVPIDFLKIMNGSNLKGSCCYFKNDSTTLDEAEIAMLELYCERAQIKDGHSVLDLGCGQGALTLYVAQKYKNSRVTAVTNSVSQKEFIEEESRKRNLSNVEVLLADITTHKMPDTYDRILVVELFEHMKNYELLLRKIKEWMAKDGLLFVEHICHKTFAYHYEPIDEDDWFTEYVFPAGTMIIPSASFFLYFQDDVSVVNHWTLSGKHFSRTNEEWLKRLDANVELIKPMFVTITGQCRQEAMKLINYWRGFCLSGMEMFGYNNGEEWMASHVLFKKK.

Positions 101, 139, 163, 167, 189, 190, and 205 each coordinate S-adenosyl-L-methionine. C336 is a catalytic residue.

This sequence belongs to the CFA/CMAS family. In terms of assembly, homodimer. In terms of tissue distribution, highly expressed in rhizomes. Detected in roots, petioles, flower buds and leaves. Expressed between the developing stele and ground tissues near the root apical meristem, in the immature endodermis, the pericycle and the spokes of developing xylem in the apical region of the root and in the protoderm of leaf primordia in rhizomes.

It is found in the cytoplasm. The enzyme catalyses norreticuline + S-adenosyl-L-methionine = reticuline + S-adenosyl-L-homocysteine + H(+). The catalysed reaction is (S)-coclaurine + S-adenosyl-L-methionine = (S)-N-methylcoclaurine + S-adenosyl-L-homocysteine + H(+). It catalyses the reaction heliamine + S-adenosyl-L-methionine = N-methylheliamine + S-adenosyl-L-homocysteine + H(+). It participates in alkaloid biosynthesis. Functionally, involved in the biosynthesis of protoberberine alkaloids. N-methyltransferase with a substrate preference for (R,S)-norreticuline but also active with dimethoxytetrahydroisoquinoline. The chain is (S)-coclaurine N-methyltransferase from Thalictrum flavum subsp. glaucum (Yellow meadow rue).